The chain runs to 226 residues: Large ribosomal subunit protein uL1 (226 aa).

Belongs to the universal ribosomal protein uL1 family. Part of the 50S ribosomal subunit.

In terms of biological role, binds directly to 23S rRNA. The L1 stalk is quite mobile in the ribosome, and is involved in E site tRNA release. Functionally, protein L1 is also a translational repressor protein, it controls the translation of the L11 operon by binding to its mRNA. In Borreliella burgdorferi (strain ATCC 35210 / DSM 4680 / CIP 102532 / B31) (Borrelia burgdorferi), this protein is Large ribosomal subunit protein uL1.